The primary structure comprises 460 residues: Ribosomal protein uS12 methylthiotransferase RimO (460 aa).

In terms of domain architecture, MTTase N-terminal spans 16-130 (NKIHFISLGC…ILSAIESKEA (115 aa)). 6 residues coordinate [4Fe-4S] cluster: Cys25, Cys61, Cys93, Cys164, Cys168, and Cys171. One can recognise a Radical SAM core domain in the interval 150-382 (STPKHYAYLK…SQTQKKNVEK (233 aa)). Positions 385–455 (KQLVGQIVEA…GYDLVGRVIK (71 aa)) constitute a TRAM domain.

It belongs to the methylthiotransferase family. RimO subfamily. It depends on [4Fe-4S] cluster as a cofactor.

The protein localises to the cytoplasm. It catalyses the reaction L-aspartate(89)-[ribosomal protein uS12]-hydrogen + (sulfur carrier)-SH + AH2 + 2 S-adenosyl-L-methionine = 3-methylsulfanyl-L-aspartate(89)-[ribosomal protein uS12]-hydrogen + (sulfur carrier)-H + 5'-deoxyadenosine + L-methionine + A + S-adenosyl-L-homocysteine + 2 H(+). Its function is as follows. Catalyzes the methylthiolation of an aspartic acid residue of ribosomal protein uS12. The chain is Ribosomal protein uS12 methylthiotransferase RimO from Chlamydia caviae (strain ATCC VR-813 / DSM 19441 / 03DC25 / GPIC) (Chlamydophila caviae).